Reading from the N-terminus, the 105-residue chain is Large ribosomal subunit protein uL24 (105 aa).

Belongs to the universal ribosomal protein uL24 family. In terms of assembly, part of the 50S ribosomal subunit.

Its function is as follows. One of two assembly initiator proteins, it binds directly to the 5'-end of the 23S rRNA, where it nucleates assembly of the 50S subunit. In terms of biological role, one of the proteins that surrounds the polypeptide exit tunnel on the outside of the subunit. The polypeptide is Large ribosomal subunit protein uL24 (Xanthomonas campestris pv. campestris (strain 8004)).